The primary structure comprises 362 residues: MDKVMAQLEGLVAHYEELQEMMADPEVINDTKRYMEISKEEADMREVVQKYRKYKSDIKEIDDNKEIISSESDDDLVEMAKEENSELEKEVAKLEDEIKILMLPKDPNDDKDIIMEIRGAAGGDEASLFAGDLLRMYEKYAETQGWKVSLIDSEPTEVGGYKRVAVMITGDKVYSKLKYENGAHRVQRVPVTESQGRVHTSTATVAVMPEYEQVDIDLDPKDIRVDVYRSSGAGGQHINKTSSAVRMTHLPTGIVVAMQDQRSQQQNREKAMQILKSRVYDYYESQNRDKYDAKRKDAVGTGDRSERIRTYNYPQNRVTDHRIGLTLNKLDRVMNGELDEIINALVLYYQTQQLEKMAEENA.

Glutamine 236 carries the N5-methylglutamine modification.

The protein belongs to the prokaryotic/mitochondrial release factor family. In terms of processing, methylated by PrmC. Methylation increases the termination efficiency of RF1.

The protein localises to the cytoplasm. Its function is as follows. Peptide chain release factor 1 directs the termination of translation in response to the peptide chain termination codons UAG and UAA. The sequence is that of Peptide chain release factor 1 from Lactobacillus gasseri (strain ATCC 33323 / DSM 20243 / BCRC 14619 / CIP 102991 / JCM 1131 / KCTC 3163 / NCIMB 11718 / NCTC 13722 / AM63).